The sequence spans 34 residues: Conotoxin de13a (34 aa).

4-hydroxyproline is present on residues P3 and P7. W14 carries the post-translational modification 6'-bromotryptophan. The residue at position 18 (K18) is a 5-hydroxylysine. P21 carries the post-translational modification 4-hydroxyproline. K25 carries the 5-hydroxylysine modification. Histidine amide is present on H32.

Contains 4 disulfide bonds. Post-translationally, the diastereomeric form of 5-hydroxylysine found was not conclusively established, but it is probably 5R. In terms of tissue distribution, expressed by the venom duct.

It localises to the secreted. This Conasprella delessertii (Sozon's cone) protein is Conotoxin de13a.